The chain runs to 300 residues: Cation-efflux pump FieF (300 aa).

A helical transmembrane segment spans residues 24-44 (LLIKIFAWWYTGSVSILAALV). Zn(2+) contacts are provided by Asp-45 and Asp-49. 2 helical membrane passes run 82–102 (AALA…LTSI) and 114–134 (PGVG…LVTF). Residues His-153 and Asp-157 each coordinate Zn(2+). Transmembrane regions (helical) follow at residues 156 to 176 (SDVM…YGWH) and 178 to 198 (ADAL…LRMG).

This sequence belongs to the cation diffusion facilitator (CDF) transporter (TC 2.A.4) family. FieF subfamily. As to quaternary structure, homodimer.

Its subcellular location is the cell inner membrane. The enzyme catalyses Zn(2+)(in) + H(+)(out) = Zn(2+)(out) + H(+)(in). It catalyses the reaction Cd(2+)(in) + H(+)(out) = Cd(2+)(out) + H(+)(in). The catalysed reaction is Fe(2+)(in) + H(+)(out) = Fe(2+)(out) + H(+)(in). Functionally, divalent metal cation transporter which exports Zn(2+), Cd(2+) and possibly Fe(2+). May be involved in zinc and iron detoxification by efflux. This is Cation-efflux pump FieF from Salmonella enteritidis PT4 (strain P125109).